We begin with the raw amino-acid sequence, 235 residues long: Biosynthetic peptidoglycan transglycosylase (235 aa).

Residues 12-34 (GLGKLLLAALLSTIVSVALLRFI) traverse the membrane as a helical segment.

Belongs to the glycosyltransferase 51 family.

The protein resides in the cell inner membrane. The catalysed reaction is [GlcNAc-(1-&gt;4)-Mur2Ac(oyl-L-Ala-gamma-D-Glu-L-Lys-D-Ala-D-Ala)](n)-di-trans,octa-cis-undecaprenyl diphosphate + beta-D-GlcNAc-(1-&gt;4)-Mur2Ac(oyl-L-Ala-gamma-D-Glu-L-Lys-D-Ala-D-Ala)-di-trans,octa-cis-undecaprenyl diphosphate = [GlcNAc-(1-&gt;4)-Mur2Ac(oyl-L-Ala-gamma-D-Glu-L-Lys-D-Ala-D-Ala)](n+1)-di-trans,octa-cis-undecaprenyl diphosphate + di-trans,octa-cis-undecaprenyl diphosphate + H(+). It functions in the pathway cell wall biogenesis; peptidoglycan biosynthesis. Functionally, peptidoglycan polymerase that catalyzes glycan chain elongation from lipid-linked precursors. This is Biosynthetic peptidoglycan transglycosylase from Aeromonas hydrophila subsp. hydrophila (strain ATCC 7966 / DSM 30187 / BCRC 13018 / CCUG 14551 / JCM 1027 / KCTC 2358 / NCIMB 9240 / NCTC 8049).